Consider the following 517-residue polypeptide: Urethanase (517 aa).

Active-site charge relay system residues include lysine 98 and serine 173. The Acyl-ester intermediate role is filled by serine 197.

Belongs to the amidase family. As to quaternary structure, homooctamer.

It catalyses the reaction urethane + H2O + H(+) = ethanol + NH4(+) + CO2. Its activity is regulated as follows. Exhibits poor salt tolerance but excellent tolerance to low concentrations of ethanol. EDTA has almost no impact on activity. Activity is increased in the presence of Ca(2+), Mg(2+) and Co(3+) and inhibited in the presence of Al(3+), Zn(2+) and Cu(2+). Hydrolase that can catalyze the degradation of ethyl carbamate (also called urethane), a probable human carcinogen widely found in alcoholic beverages. Can also use methyl carbamate, butyl carbamate, acetamide and urea. Also catalyzes the enantioselective hydrolysis of 2-phenylpropionamide, alpha-chlorophenylacetamide, 2-methyl-3-phenylpropionamide and alpha-methoxyphenylacetamide to the corresponding acids. Is inactive on benzamide and L-glutamine. The protein is Urethanase of Rhizobium radiobacter (Agrobacterium tumefaciens).